The sequence spans 382 residues: Flap endonuclease 1 (382 aa).

The segment at 1–104 (MGIKGLSQVI…GELEKRTERR (104 aa)) is N-domain. D34 contacts Mg(2+). DNA contacts are provided by R47 and R70. 5 residues coordinate Mg(2+): D86, E158, E160, D179, and D181. The tract at residues 122-253 (EAEKFERRLV…KKAVELIKQH (132 aa)) is I-domain. DNA is bound at residue E158. DNA contacts are provided by G231 and D233. D233 provides a ligand contact to Mg(2+). Residues 336–344 (TQGRIDSFF) form an interaction with PCNA region. Over residues 359–368 (KAQEEAEKMK) the composition is skewed to basic and acidic residues. The segment at 359–382 (KAQEEAEKMKKGGKKSGPPKKKAK) is disordered. A compositionally biased stretch (basic residues) spans 369–382 (KGGKKSGPPKKKAK).

The protein belongs to the XPG/RAD2 endonuclease family. FEN1 subfamily. In terms of assembly, interacts with PCNA. Three molecules of crn-1 bind to one PCNA trimer with each molecule binding to one PCNA monomer. PCNA stimulates the nuclease activity without altering cleavage specificity. Mg(2+) is required as a cofactor. Phosphorylated. Phosphorylation upon DNA damage induces relocalization to the nuclear plasma.

It is found in the nucleus. The protein resides in the nucleolus. It localises to the nucleoplasm. Its subcellular location is the mitochondrion. Functionally, structure-specific nuclease with 5'-flap endonuclease and 5'-3' exonuclease activities involved in DNA replication and repair. During DNA replication, cleaves the 5'-overhanging flap structure that is generated by displacement synthesis when DNA polymerase encounters the 5'-end of a downstream Okazaki fragment. It enters the flap from the 5'-end and then tracks to cleave the flap base, leaving a nick for ligation. Also involved in the long patch base excision repair (LP-BER) pathway, by cleaving within the apurinic/apyrimidinic (AP) site-terminated flap. Acts as a genome stabilization factor that prevents flaps from equilibrating into structures that lead to duplications and deletions. Also possesses 5'-3' exonuclease activity on nicked or gapped double-stranded DNA, and exhibits RNase H activity. Also involved in replication and repair of rDNA and in repairing mitochondrial DNA. The protein is Flap endonuclease 1 of Caenorhabditis briggsae.